We begin with the raw amino-acid sequence, 715 residues long: Fatty acid oxidation complex subunit alpha (715 aa).

Residues 1–190 are enoyl-CoA hydratase/isomerase; it reads MIYEGKAITV…KVGAVDAVVA (190 aa). D297 contributes to the substrate binding site. The 3-hydroxyacyl-CoA dehydrogenase stretch occupies residues 312 to 715; it reads HDVKQAAVLG…MAKNGQRFFN (404 aa). Residues M325, D344, 401–403, K408, and S430 each bind NAD(+); that span reads VVE. H451 acts as the For 3-hydroxyacyl-CoA dehydrogenase activity in catalysis. N454 is an NAD(+) binding site. N501 and Y660 together coordinate substrate.

This sequence in the N-terminal section; belongs to the enoyl-CoA hydratase/isomerase family. The protein in the C-terminal section; belongs to the 3-hydroxyacyl-CoA dehydrogenase family. Heterotetramer of two alpha chains (FadB) and two beta chains (FadA).

It carries out the reaction a (3S)-3-hydroxyacyl-CoA + NAD(+) = a 3-oxoacyl-CoA + NADH + H(+). The enzyme catalyses a (3S)-3-hydroxyacyl-CoA = a (2E)-enoyl-CoA + H2O. The catalysed reaction is a 4-saturated-(3S)-3-hydroxyacyl-CoA = a (3E)-enoyl-CoA + H2O. It catalyses the reaction (3S)-3-hydroxybutanoyl-CoA = (3R)-3-hydroxybutanoyl-CoA. It carries out the reaction a (3Z)-enoyl-CoA = a 4-saturated (2E)-enoyl-CoA. The enzyme catalyses a (3E)-enoyl-CoA = a 4-saturated (2E)-enoyl-CoA. The protein operates within lipid metabolism; fatty acid beta-oxidation. Functionally, involved in the aerobic and anaerobic degradation of long-chain fatty acids via beta-oxidation cycle. Catalyzes the formation of 3-oxoacyl-CoA from enoyl-CoA via L-3-hydroxyacyl-CoA. It can also use D-3-hydroxyacyl-CoA and cis-3-enoyl-CoA as substrate. The protein is Fatty acid oxidation complex subunit alpha of Pseudomonas entomophila (strain L48).